We begin with the raw amino-acid sequence, 657 residues long: WD repeat-containing protein 70 (657 aa).

Disordered regions lie at residues 1-21 and 43-172; these read MEHSGTSEVTGADTAGPDPQL and FEQT…PVQR. Over residues 45–78 the composition is skewed to basic and acidic residues; the sequence is QTRRTAVERSRKTLEAREKEEEMNREKELRKQIE. Positions 82-105 are enriched in low complexity; it reads PAPSSSSAARERSQSSCRDTSSSD. 2 stretches are compositionally biased toward acidic residues: residues 106–119 and 150–168; these read SESDDSSDSSDDEL and EEGEDDDDDELDDEGEEDN. 7 WD repeats span residues 183-222, 230-271, 284-324, 333-372, 379-418, 424-469, and 472-511; these read HGTKTVSALGLDPSGARLVTGGYDYDVKFWDFAGMDASFK, CECH…ECIK, GHTA…KQKS, GKKVIPTTCTYSRDGNLVAAACQNGSIQIWDRNLTVHPKF, DPGTDTSCVAFSYDGNVLASRGGDDTLKLWDVRQFNKPLF, PTLF…RVYE, and ITDASVVRCLWHPKLNQIMVGTGNGLAKVYYDPNKSQRGA. K299 is covalently cross-linked (Glycyl lysine isopeptide (Lys-Gly) (interchain with G-Cter in SUMO2)). K455 carries the post-translational modification N6-acetyllysine. Residues 543–568 show a composition bias toward basic and acidic residues; that stretch reads REPRQRSTRKQLEKDRLDPLKSHKPE. Residues 543–584 are disordered; the sequence is REPRQRSTRKQLEKDRLDPLKSHKPEPPVAGPGRGGRVGTHG. Positions 574–584 are enriched in gly residues; sequence PGRGGRVGTHG. T582 carries the post-translational modification Phosphothreonine. Glycyl lysine isopeptide (Lys-Gly) (interchain with G-Cter in SUMO2) cross-links involve residues K593 and K599. Residues S624 and S641 each carry the phosphoserine modification. The segment at 634–657 is disordered; it reads TMFAQVESDDEESKNEPEWKKRKI. Residues 647 to 657 are compositionally biased toward basic and acidic residues; it reads KNEPEWKKRKI.

This sequence belongs to the WD repeat GAD-1 family.

This Mus musculus (Mouse) protein is WD repeat-containing protein 70 (Wdr70).